Here is a 462-residue protein sequence, read N- to C-terminus: ATP synthase subunit beta (462 aa).

152 to 159 (GGAGVGKT) is an ATP binding site.

This sequence belongs to the ATPase alpha/beta chains family. As to quaternary structure, F-type ATPases have 2 components, CF(1) - the catalytic core - and CF(0) - the membrane proton channel. CF(1) has five subunits: alpha(3), beta(3), gamma(1), delta(1), epsilon(1). CF(0) has three main subunits: a(1), b(2) and c(9-12). The alpha and beta chains form an alternating ring which encloses part of the gamma chain. CF(1) is attached to CF(0) by a central stalk formed by the gamma and epsilon chains, while a peripheral stalk is formed by the delta and b chains.

It localises to the cell inner membrane. The catalysed reaction is ATP + H2O + 4 H(+)(in) = ADP + phosphate + 5 H(+)(out). Produces ATP from ADP in the presence of a proton gradient across the membrane. The catalytic sites are hosted primarily by the beta subunits. The polypeptide is ATP synthase subunit beta (Tolumonas auensis (strain DSM 9187 / NBRC 110442 / TA 4)).